Reading from the N-terminus, the 261-residue chain is Transmembrane protein 106A (261 aa).

The segment at 1–23 (MGKAVSQLTSRKDEDKPILPDNP) is disordered. Residues 93–113 (LFVFLSVAICLLIFSLTIFFL) traverse the membrane as a helical segment.

Belongs to the TMEM106 family. As to expression, expressed in liver, spleen, lung, kidney, lymph nodes and adipose tissue (at protein level). Expressed by macrophages.

Its subcellular location is the cell membrane. Functionally, activates macrophages and polarizes them into M1-like macrophages through the activation of the MAPK and NF-kappaB signaling pathway. Upon activation, up-regulates the expression of CD80, CD86, CD69 and MHC II on macrophages, and induces the release of pro-inflammatory cytokines such as TNF, IL1B, IL6, CCL2 and nitric oxide. May play a role in inhibition of proliferation and migration. In Mus musculus (Mouse), this protein is Transmembrane protein 106A (Tmem106a).